The sequence spans 319 residues: Acetyl esterase (319 aa).

The Involved in the stabilization of the negatively charged intermediate by the formation of the oxyanion hole motif lies at His91 to Gly93. Residues Ser165, Asp262, and His292 contribute to the active site.

Belongs to the 'GDXG' lipolytic enzyme family. In terms of assembly, homodimer. Interacts with MalT and MelA.

Its subcellular location is the cytoplasm. Its function is as follows. Displays esterase activity towards short chain fatty esters (acyl chain length of up to 8 carbons). Able to hydrolyze triacetylglycerol (triacetin) and tributyrylglycerol (tributyrin), but not trioleylglycerol (triolein) or cholesterol oleate. Negatively regulates MalT activity by antagonizing maltotriose binding. Inhibits MelA galactosidase activity. This is Acetyl esterase from Escherichia coli O81 (strain ED1a).